Reading from the N-terminus, the 105-residue chain is Heat shock protein HspQ (105 aa).

Residues 75 to 105 are disordered; that stretch reads GEMQEEHPEQPSMDELARSIRQQLQAPRLRN.

It belongs to the HspQ family.

Its subcellular location is the cytoplasm. Involved in the degradation of certain denaturated proteins, including DnaA, during heat shock stress. This chain is Heat shock protein HspQ, found in Cronobacter sakazakii (strain ATCC BAA-894) (Enterobacter sakazakii).